A 38-amino-acid polypeptide reads, in one-letter code: Small ribosomal subunit protein uS12c (38 aa).

Residues 1–26 (MPTIQQLIRNARQPIENRKKSPALRG) are disordered.

This sequence belongs to the universal ribosomal protein uS12 family. In terms of assembly, part of the 30S ribosomal subunit.

It localises to the plastid. The protein localises to the chloroplast. In terms of biological role, with S4 and S5 plays an important role in translational accuracy. Located at the interface of the 30S and 50S subunits. The polypeptide is Small ribosomal subunit protein uS12c (rps12) (Pinus contorta (Shore pine)).